Here is a 372-residue protein sequence, read N- to C-terminus: Peroxisomal biogenesis factor 3 (372 aa).

Topologically, residues 1–15 are cytoplasmic; it reads MLRSMWNFLKRHKKK. Residues 1–45 are targeting to peroxisomes; it reads MLRSMWNFLKRHKKKCIFLGTVLGGVYILGKYGQKKIREIQEREA. A helical transmembrane segment spans residues 16–36; that stretch reads CIFLGTVLGGVYILGKYGQKK. The Peroxisomal portion of the chain corresponds to 37-116; sequence IREIQEREAA…LKIISFTRSI (80 aa). The helical transmembrane segment at 117 to 140 threads the bilayer; sequence VAVYSTCMLVVLLRVQLNIIGGYI. Residues 120–136 form an interaction with PEX19 region; sequence YSTCMLVVLLRVQLNII. The Cytoplasmic segment spans residues 141-372; that stretch reads YLDNATVGKN…AFSTPQQLEK (232 aa).

The protein belongs to the peroxin-3 family. As to quaternary structure, interacts with PEX19. Identified in all tissues analyzed, with the strongest expression in liver and in testis.

The protein localises to the peroxisome membrane. In terms of biological role, involved in peroxisome biosynthesis and integrity. Assembles membrane vesicles before the matrix proteins are translocated. As a docking factor for PEX19, is necessary for the import of peroxisomal membrane proteins in the peroxisomes. The chain is Peroxisomal biogenesis factor 3 (Pex3) from Mus musculus (Mouse).